The following is a 290-amino-acid chain: Short-chain dehydrogenase srdE (290 aa).

4 residues coordinate NADP(+): Ile11, Thr37, Asp58, and Asn86. The chain crosses the membrane as a helical span at residues 125 to 145; it reads LIASSGIIVNIGSIGGVVPFV. Tyr150 provides a ligand contact to NADP(+). The active-site Proton donor is the Tyr150. Residue Asn151 is glycosylated (N-linked (GlcNAc...) asparagine). NADP(+) contacts are provided by Lys154, Val183, and Thr185. The Lowers pKa of active site Tyr role is filled by Lys154.

This sequence belongs to the short-chain dehydrogenases/reductases (SDR) family.

The protein resides in the membrane. Short-chain dehydrogenase; part of the gene cluster that mediates the biosynthesis of sordarial, a salicylic aldehyde structurally related to the phytotoxin pyriculol. The most interesting aspect of this pathway is formation of an aromatic product from the highly reducing polyketide synthase srdA. SrdA synthesizes a reduced polyketide chain from one molecule of acetyl-CoA and five molecules of malonyl-CoA. The polyketide chain is then reductively released as an aldehyde. The oxidoreductases srdC, srdD and srdE then oxidize one of the hydroxy groups to facilitate the intramolecular aldol condensation, followed by dehydration to yield a salicylic aldehyde. This aldehyde can undergo facile reduction by endogenous reductases to yield the alcohol 1-hydroxy-2-hydroxymethyl-3-pent-1,3-dienylbenzene. The flavin-dependent srdI counteract against the propensity of the aldehydes to be reduced under physiological conditions and is responsible for reoxidizing 1-hydroxy-2-hydroxymethyl-3-pent-1,3-dienylbenzene back to the salicylic aldehyde. This salicylic aldehyde is then selectively epoxidized by the cupin-domain-containing oxidoreductase srdB to yield the epoxide, which can be hydrolyzed stereoselectively by the hydrolase srdG to give the final product sordarial. This is Short-chain dehydrogenase srdE from Neurospora crassa (strain ATCC 24698 / 74-OR23-1A / CBS 708.71 / DSM 1257 / FGSC 987).